We begin with the raw amino-acid sequence, 318 residues long: NADH-ubiquinone oxidoreductase chain 1 (318 aa).

9 helical membrane passes run 2–22 (FLMN…FLTL), 37–57 (PNIV…KLFI), 69–89 (LMFT…WIPM), 100–120 (LGVL…LWSG), 136–156 (VAQT…TMMM), 171–191 (HMWL…STLA), 206–226 (ELVS…FFMA), 253–273 (ELFT…FLWI), and 294–314 (LPLT…SAGI).

This sequence belongs to the complex I subunit 1 family.

The protein localises to the mitochondrion inner membrane. The catalysed reaction is a ubiquinone + NADH + 5 H(+)(in) = a ubiquinol + NAD(+) + 4 H(+)(out). In terms of biological role, core subunit of the mitochondrial membrane respiratory chain NADH dehydrogenase (Complex I) that is believed to belong to the minimal assembly required for catalysis. Complex I functions in the transfer of electrons from NADH to the respiratory chain. The immediate electron acceptor for the enzyme is believed to be ubiquinone. The sequence is that of NADH-ubiquinone oxidoreductase chain 1 (MT-ND1) from Tolypeutes matacus (Southern three-banded armadillo).